Here is a 92-residue protein sequence, read N- to C-terminus: MAKRTKKVGIVGKYGTRYGASIRKQIKKMEVSQHSKYFCEFCGKYGVKRKAVGIWGCKDCGKVKAGGAYTMNTASAVTVRSTIRRLREQIEG.

The C4-type zinc-finger motif lies at 39 to 60; it reads CEFCGKYGVKRKAVGIWGCKDC.

The protein belongs to the eukaryotic ribosomal protein eL43 family.

The chain is Large ribosomal subunit protein eL43y (RPL37AC) from Arabidopsis thaliana (Mouse-ear cress).